Consider the following 233-residue polypeptide: Low affinity immunoglobulin gamma Fc region receptor III-B (233 aa).

The N-terminal stretch at 1–16 (MWQLLLPTALLLLVSA) is a signal peptide. 2 Ig-like C2-type domains span residues 40–96 (KDSV…LSTL) and 121–179 (EDPI…VGSK). Cys-47 and Cys-89 are oxidised to a cystine. N-linked (GlcNAc...) asparagine glycosylation is found at Asn-56, Asn-63, Asn-82, and Asn-92. Residues Cys-128 and Cys-172 are joined by a disulfide bond. Asn-180 and Asn-187 each carry an N-linked (GlcNAc...) asparagine glycan. Ser-200 is lipidated: GPI-anchor amidated serine. Positions 201 to 233 (SFSPPGYQVSFCLVMVLLFAVDTGLYFSVKTNI) are cleaved as a propeptide — removed in mature form.

Monomer. Interacts with INPP5D/SHIP1. Glycosylated. Glycosylation plays an inhibitory role in the interaction with IgG3. In terms of processing, the soluble form is produced by a proteolytic cleavage. Expressed specifically by polymorphonuclear leukocytes (neutrophils). Also expressed by stimulated eosinophils.

It is found in the cell membrane. Its subcellular location is the secreted. In terms of biological role, receptor for the Fc region of immunoglobulins gamma. Low affinity receptor. Binds complexed or aggregated IgG and also monomeric IgG. Contrary to III-A, is not capable to mediate antibody-dependent cytotoxicity and phagocytosis. May serve as a trap for immune complexes in the peripheral circulation which does not activate neutrophils. This is Low affinity immunoglobulin gamma Fc region receptor III-B (FCGR3B) from Homo sapiens (Human).